Consider the following 640-residue polypeptide: Threonine--tRNA ligase (640 aa).

A TGS domain is found at 1–59 (MKIKVKLPDGKEKEYDRGITPAEIAKELGVKKAIGAVVNGELWDLKRPIENDCELRLVT). A catalytic region spans residues 240–531 (DHRKLGPHLE…LIEHFAGAFP (292 aa)). 3 residues coordinate Zn(2+): cysteine 332, histidine 383, and histidine 508.

Belongs to the class-II aminoacyl-tRNA synthetase family. Homodimer. Requires Zn(2+) as cofactor.

The protein resides in the cytoplasm. It carries out the reaction tRNA(Thr) + L-threonine + ATP = L-threonyl-tRNA(Thr) + AMP + diphosphate + H(+). In terms of biological role, catalyzes the attachment of threonine to tRNA(Thr) in a two-step reaction: L-threonine is first activated by ATP to form Thr-AMP and then transferred to the acceptor end of tRNA(Thr). Also edits incorrectly charged L-seryl-tRNA(Thr). In Thermotoga sp. (strain RQ2), this protein is Threonine--tRNA ligase.